A 1040-amino-acid chain; its full sequence is Multidrug resistance protein MdtB (1040 aa).

The next 12 helical transmembrane spans lie at 16-36 (FILR…AGII), 347-367 (LMLA…NIPA), 369-389 (IIPA…MVFL), 396-416 (LTLM…IVVI), 440-460 (IGFT…PLLF), 472-492 (FAVT…TLTP), 537-557 (WLTL…WIFI), 863-883 (LGST…VLGV), 888-908 (FIHP…ALLA), 911-931 (IAGA…IGIV), 968-988 (ILMT…STGV), and 998-1018 (IGMV…TPVI).

It belongs to the resistance-nodulation-cell division (RND) (TC 2.A.6) family. MdtB subfamily. As to quaternary structure, part of a tripartite efflux system composed of MdtA, MdtB and MdtC. MdtB forms a heteromultimer with MdtC.

Its subcellular location is the cell inner membrane. The sequence is that of Multidrug resistance protein MdtB from Cronobacter sakazakii (strain ATCC BAA-894) (Enterobacter sakazakii).